Here is a 2200-residue protein sequence, read N- to C-terminus: Non-reducing polyketide synthase tpeB (2200 aa).

Residues Phe16 to His255 form the Starter acyltransferase (SAT) domain. The region spanning Ser382–Glu815 is the Ketosynthase family 3 (KS3) domain. Residues Cys554, His690, and His729 each act as for beta-ketoacyl synthase activity in the active site. Residues Val914 to Leu1202 enclose the Malonyl-CoA:ACP transacylase (MAT) domain. Residues Thr1296–Gly1621 are product template (PT) domain. Residues Gln1300–Asp1433 are N-terminal hotdog fold. The region spanning Gln1300 to Thr1617 is the PKS/mFAS DH domain. His1332 acts as the Proton acceptor; for dehydratase activity in catalysis. The C-terminal hotdog fold stretch occupies residues Asn1462–Thr1617. The active-site Proton donor; for dehydratase activity is Asp1522. Residues Asp1625 to Ser1652 are disordered. Positions Asn1636–Thr1650 are enriched in low complexity. 2 consecutive Carrier domains span residues Thr1671–Pro1748 and Ala1791–Thr1865. Ser1708 and Ser1825 each carry O-(pantetheine 4'-phosphoryl)serine. Residues Met1931–Met2173 are thioesterase (TE) domain.

It depends on pantetheine 4'-phosphate as a cofactor.

Its pathway is secondary metabolite biosynthesis. In terms of biological role, non-reducing polyketide synthase; part of the gene cluster that mediates the biosynthesis of polyesters containing 2,4-dihydroxy-6-(2-hydroxypropyl)benzoate and 3-hydroxybutyrate moieties, such as talapolyester G, 15G256beta and 15G256beta-2; as well as to oxidized derivatives such as 15G256alpha. The biosynthesis of the polyesters probably starts with the formation of the diketide 3-hydroxybutyryl-S-ACP catalyzed by the partially reducing polyketide synthase tpeA. The acceptance of 3-hydroxybutyryl by the non-reducing polyketide synthase tpeB would initiate further elongation and cyclization, catalyzed by KS and PT, respectively, to form 2,4-dihydroxy-6-(2-hydroxyn-propyl)benzoyl-S-ACP intermediate. The TE domain could catalyze lactonization at this step to yield 6-hydroxymellein as a derailment product. The polyesterification process maybe occurs when additional molecules of 3-hydroxybutyryl are transferred to tpeB. Following the first esterification step, an intramolecular cyclization catalyzed by the TE domain of tpeB would give talarodioxadione 1, whereas the ethyl esterification of talapolyester G perhaps happens spontaneously. Further oxidation by the cytochrome P450 monooxygenase tpeC then leads to the formation of oxidized derivatives. This Talaromyces stipitatus (strain ATCC 10500 / CBS 375.48 / QM 6759 / NRRL 1006) (Penicillium stipitatum) protein is Non-reducing polyketide synthase tpeB.